Reading from the N-terminus, the 294-residue chain is 4-hydroxy-tetrahydrodipicolinate synthase (294 aa).

Thr-45 lines the pyruvate pocket. Tyr-133 acts as the Proton donor/acceptor in catalysis. The active-site Schiff-base intermediate with substrate is the Lys-161. Ile-203 is a binding site for pyruvate.

The protein belongs to the DapA family. In terms of assembly, homotetramer; dimer of dimers.

It is found in the cytoplasm. The catalysed reaction is L-aspartate 4-semialdehyde + pyruvate = (2S,4S)-4-hydroxy-2,3,4,5-tetrahydrodipicolinate + H2O + H(+). Its pathway is amino-acid biosynthesis; L-lysine biosynthesis via DAP pathway; (S)-tetrahydrodipicolinate from L-aspartate: step 3/4. Catalyzes the condensation of (S)-aspartate-beta-semialdehyde [(S)-ASA] and pyruvate to 4-hydroxy-tetrahydrodipicolinate (HTPA). The protein is 4-hydroxy-tetrahydrodipicolinate synthase of Alcanivorax borkumensis (strain ATCC 700651 / DSM 11573 / NCIMB 13689 / SK2).